The chain runs to 118 residues: UPF0102 protein NE0711 (118 aa).

It belongs to the UPF0102 family.

The protein is UPF0102 protein NE0711 of Nitrosomonas europaea (strain ATCC 19718 / CIP 103999 / KCTC 2705 / NBRC 14298).